The following is a 420-amino-acid chain: S-adenosylmethionine synthase (420 aa).

His-16 is an ATP binding site. Asp-18 contributes to the Mg(2+) binding site. Glu-44 lines the K(+) pocket. Residues Glu-57 and Gln-100 each coordinate L-methionine. The tract at residues 100–110 (QSPDIAQGVNT) is flexible loop. Residues 175–177 (DGK), 251–252 (KF), Asp-260, 266–267 (RK), Ala-283, and Lys-287 contribute to the ATP site. Asp-260 is an L-methionine binding site. Position 291 (Lys-291) interacts with L-methionine.

The protein belongs to the AdoMet synthase family. In terms of assembly, homotetramer; dimer of dimers. Requires Mg(2+) as cofactor. The cofactor is K(+).

The protein resides in the cytoplasm. The enzyme catalyses L-methionine + ATP + H2O = S-adenosyl-L-methionine + phosphate + diphosphate. The protein operates within amino-acid biosynthesis; S-adenosyl-L-methionine biosynthesis; S-adenosyl-L-methionine from L-methionine: step 1/1. Functionally, catalyzes the formation of S-adenosylmethionine (AdoMet) from methionine and ATP. The overall synthetic reaction is composed of two sequential steps, AdoMet formation and the subsequent tripolyphosphate hydrolysis which occurs prior to release of AdoMet from the enzyme. This is S-adenosylmethionine synthase from Trichormus variabilis (strain ATCC 29413 / PCC 7937) (Anabaena variabilis).